The sequence spans 564 residues: Ubiquitin carboxyl-terminal hydrolase 39 (564 aa).

Positions 1-96 (MSSRSKRQSH…VRAKNGRVDS (96 aa)) are disordered. Residues 28–39 (IKKERDREKEPE) are compositionally biased toward basic and acidic residues. Position 46 is a phosphoserine (serine 46). Residue lysine 51 forms a Glycyl lysine isopeptide (Lys-Gly) (interchain with G-Cter in SUMO2) linkage. Low complexity predominate over residues 59 to 69 (REVPAPALPVV). Position 81 is a phosphoserine (serine 81). Basic and acidic residues predominate over residues 84–96 (EREVRAKNGRVDS). The UBP-type; degenerate zinc finger occupies 102–199 (RHCPYLDTIN…YVLKPTFTKQ (98 aa)). Positions 135, 138, 154, and 160 each coordinate Zn(2+). The region spanning 224–554 (VGLNNIKAND…EAYIQIWKRR (331 aa)) is the USP domain.

The protein belongs to the peptidase C19 family. In terms of assembly, the U4/U6-U5 tri-snRNP complex is a building block of the precatalytic spliceosome (spliceosome B complex). Component of the U4/U6-U5 tri-snRNP complex composed of the U4, U6 and U5 snRNAs and at least PRPF3, PRPF4, PRPF6, PRPF8, PRPF31, SNRNP200, TXNL4A, SNRNP40, SNRPB, SNRPD1, SNRPD2, SNRPD3, SNRPE, SNRPF, SNRPG, DDX23, CD2BP2, PPIH, SNU13, EFTUD2, SART1 and USP39, plus LSM2, LSM3, LSM4, LSM5, LSM6, LSM7 and LSM8.

The protein localises to the nucleus. It carries out the reaction Thiol-dependent hydrolysis of ester, thioester, amide, peptide and isopeptide bonds formed by the C-terminal Gly of ubiquitin (a 76-residue protein attached to proteins as an intracellular targeting signal).. Its function is as follows. Deubiquitinating enzyme that plays a role in many cellular processes including cellular antiviral response, epithelial morphogenesis, DNA repair or B-cell development. Plays a role in pre-mRNA splicing as a component of the U4/U6-U5 tri-snRNP, one of the building blocks of the precatalytic spliceosome. Specifically regulates immunoglobulin gene rearrangement in a spliceosome-dependent manner, which involves modulating chromatin interactions at the Igh locus and therefore plays an essential role in B-cell development. Regulates AURKB mRNA levels, and thereby plays a role in cytokinesis and in the spindle checkpoint. Regulates apoptosis and G2/M cell cycle checkpoint in response to DNA damage by deubiquitinating and stabilizing CHK2. Also plays an important role in DNA repair by controlling the recruitment of XRCC4/LIG4 to DNA double-strand breaks for non-homologous end-joining repair. Participates in antiviral activity by affecting the type I IFN signaling by stabilizing STAT1 and decreasing its 'Lys-6'-linked ubiquitination. Contributes to non-canonical Wnt signaling during epidermal differentiation. Acts as a negative regulator NF-kappa-B activation through deubiquitination of 'Lys-48'-linked ubiquitination of NFKBIA. This Mus musculus (Mouse) protein is Ubiquitin carboxyl-terminal hydrolase 39.